The following is a 643-amino-acid chain: Probable potassium transport system protein Kup 2 (643 aa).

The tract at residues 1 to 20 (MSSHVPSFLRGTPDMTAHGG) is disordered. Helical transmembrane passes span 27-47 (VAGLMLAAIGVVFGDIGTSPL), 70-90 (VLSLVFWAITIIVSFKYVIII), 120-140 (LMVSALGIFAAALFYGDSIIT), 157-177 (PHLEQWVVPLTIVILFVLFAI), 185-205 (VGKMFGPVMLVWFLTLAILGI), 231-251 (GWHAFLALGSVVLAVTGAEAL), 267-287 (WYLLVLPALILNYFGQGALLI), 300-320 (LAPASLALPLVILATLATVIA), 357-377 (IYLPFVNWLLMCMVMVLVVGF), 389-409 (VAVTGTMVIDALLVGTVMLLI), 419-439 (WLIGGFLVVDLAFFLANSIKI), and 440-460 (PDGGWFPLVVGGLLFTILTTW).

Belongs to the HAK/KUP transporter (TC 2.A.72) family.

The protein localises to the cell inner membrane. The enzyme catalyses K(+)(in) + H(+)(in) = K(+)(out) + H(+)(out). Functionally, transport of potassium into the cell. Likely operates as a K(+):H(+) symporter. This chain is Probable potassium transport system protein Kup 2, found in Paramagnetospirillum magneticum (strain ATCC 700264 / AMB-1) (Magnetospirillum magneticum).